The primary structure comprises 65 residues: MPKLKTHRGLAKRIKISGSGKYLRKKAGKSHLLSGKSRKRKRNLKKTVVVDATNVKAVKKLLPYL.

It belongs to the bacterial ribosomal protein bL35 family.

In Caldicellulosiruptor bescii (strain ATCC BAA-1888 / DSM 6725 / KCTC 15123 / Z-1320) (Anaerocellum thermophilum), this protein is Large ribosomal subunit protein bL35.